A 193-amino-acid chain; its full sequence is Peptidyl-tRNA hydrolase (193 aa).

Tyr-15 is a binding site for tRNA. His-20 acts as the Proton acceptor in catalysis. Residues Phe-65, Asn-67, and Asn-113 each contribute to the tRNA site.

Belongs to the PTH family. As to quaternary structure, monomer.

Its subcellular location is the cytoplasm. The enzyme catalyses an N-acyl-L-alpha-aminoacyl-tRNA + H2O = an N-acyl-L-amino acid + a tRNA + H(+). Hydrolyzes ribosome-free peptidyl-tRNAs (with 1 or more amino acids incorporated), which drop off the ribosome during protein synthesis, or as a result of ribosome stalling. Its function is as follows. Catalyzes the release of premature peptidyl moieties from peptidyl-tRNA molecules trapped in stalled 50S ribosomal subunits, and thus maintains levels of free tRNAs and 50S ribosomes. The polypeptide is Peptidyl-tRNA hydrolase (Ehrlichia ruminantium (strain Welgevonden)).